A 376-amino-acid chain; its full sequence is Putative glutamate--cysteine ligase 2 (376 aa).

Belongs to the glutamate--cysteine ligase type 2 family. YbdK subfamily.

It catalyses the reaction L-cysteine + L-glutamate + ATP = gamma-L-glutamyl-L-cysteine + ADP + phosphate + H(+). Functionally, ATP-dependent carboxylate-amine ligase which exhibits weak glutamate--cysteine ligase activity. This Mycobacterium bovis (strain ATCC BAA-935 / AF2122/97) protein is Putative glutamate--cysteine ligase 2.